The chain runs to 304 residues: E3 ubiquitin-protein ligase CCNB1IP1 homolog (304 aa).

An RING-type; degenerate zinc finger spans residues 3 to 42 (CNACWRDLEGRAISTTCGHLLCTEDASKILSNDGACPICD). Residues 124–184 (TAYQKMGKRC…YESVKRTAIQ (61 aa)) are a coiled coil. Residues 218–279 (SFFSPATPGP…GGGGTANPQS (62 aa)) are disordered. The segment covering 235-250 (RQNSSNSGPFDISTDS) has biased composition (polar residues).

As to expression, expressed mostly in flower buds and roots.

The protein resides in the nucleus. It is found in the chromosome. It carries out the reaction S-ubiquitinyl-[E2 ubiquitin-conjugating enzyme]-L-cysteine + [acceptor protein]-L-lysine = [E2 ubiquitin-conjugating enzyme]-L-cysteine + N(6)-ubiquitinyl-[acceptor protein]-L-lysine.. It participates in protein modification; protein ubiquitination. Its function is as follows. Ubiquitin E3 ligase required for class I crossover (CO) formation during meiosis. This chain is E3 ubiquitin-protein ligase CCNB1IP1 homolog (HEI10), found in Arabidopsis thaliana (Mouse-ear cress).